A 67-amino-acid polypeptide reads, in one-letter code: Small ribosomal subunit protein bS21 (67 aa).

Belongs to the bacterial ribosomal protein bS21 family.

The protein is Small ribosomal subunit protein bS21 (rpsU) of Aquifex aeolicus (strain VF5).